We begin with the raw amino-acid sequence, 273 residues long: MGQKVNPHGFRLGITTDHVSHWFADSTKPGQRYKDFVREDIKIRQLMSTGMERAGIAKVEIERTRDRVRVDIHTARPGIVIGRRGAEADRIRGELEKLTGKQVQLNILEVKNPEMEAQLVAQGIAEQLTSRVAFRRAMKKAMQSAQRAGAKGIRVACSGRLGGAEMSRSEFYREGRVPLHTLRANIDYGFYEAKTTFGRIGVKVWIYKGDVTAKELAQQAAAAPSRGRAGDRPGRPGGDRRRRNDRPAAEAAPAAVEAPAAEAAAPAAEGGQA.

The KH type-2 domain maps to 43-111; that stretch reads IRQLMSTGME…QVQLNILEVK (69 aa). Residues 218–227 are compositionally biased toward low complexity; that stretch reads QQAAAAPSRG. The interval 218 to 273 is disordered; the sequence is QQAAAAPSRGRAGDRPGRPGGDRRRRNDRPAAEAAPAAVEAPAAEAAAPAAEGGQA. The span at 228-239 shows a compositional bias: basic and acidic residues; the sequence is RAGDRPGRPGGD. Positions 249 to 273 are enriched in low complexity; sequence AEAAPAAVEAPAAEAAAPAAEGGQA.

It belongs to the universal ribosomal protein uS3 family. As to quaternary structure, part of the 30S ribosomal subunit. Forms a tight complex with proteins S10 and S14.

Its function is as follows. Binds the lower part of the 30S subunit head. Binds mRNA in the 70S ribosome, positioning it for translation. The protein is Small ribosomal subunit protein uS3 of Paenarthrobacter aurescens (strain TC1).